The chain runs to 152 residues: SKP1-like protein 10 (152 aa).

The interval 94-152 (IMAANYLNIKSLLDLACQTVADMIKDNTVEHTRKFFNIENDYTHEEEEAVRRENQWGFE) is interaction with the F-box domain of F-box proteins.

This sequence belongs to the SKP1 family. In terms of assembly, part of a SCF (SKP1-cullin-F-box) protein ligase complex. Interacts with CPR1/CPR30. Expressed in young seedlings, roots, leaves, floral stems, inflorescences, and siliques.

It is found in the nucleus. It functions in the pathway protein modification; protein ubiquitination. Functionally, involved in ubiquitination and subsequent proteasomal degradation of target proteins. Together with CUL1, RBX1 and a F-box protein, it forms a SCF E3 ubiquitin ligase complex. The functional specificity of this complex depends on the type of F-box protein. In the SCF complex, it serves as an adapter that links the F-box protein to CUL1. This chain is SKP1-like protein 10 (ASK10), found in Arabidopsis thaliana (Mouse-ear cress).